Reading from the N-terminus, the 149-residue chain is Large ribosomal subunit protein uL16c (149 aa).

This sequence belongs to the universal ribosomal protein uL16 family. In terms of assembly, part of the 50S ribosomal subunit.

The protein localises to the plastid. It is found in the organellar chromatophore. This is Large ribosomal subunit protein uL16c (rpl16) from Paulinella chromatophora.